Reading from the N-terminus, the 411-residue chain is Signal-transducing adaptor protein 2 (411 aa).

One can recognise a PH domain in the interval 20 to 120 (HYYESFLEKK…GFILTVVELR (101 aa)). Phosphotyrosine is present on tyrosine 22. The region spanning 152–248 (WCFLQVSRLE…RALVPFLLDE (97 aa)) is the SH2 domain. Position 250 is a phosphotyrosine; by PTK6 (tyrosine 250). Residues 291-320 (VPVSVSSQEDKLPQLPPLPQLPDTDENYVT) are disordered. 2 positions are modified to phosphotyrosine: tyrosine 318 and tyrosine 330. A disordered region spans residues 338–364 (SSQAVPLKPKKPARLPAKPPKPSVVPK). Residues 390 to 410 (TRLGDITAELEEKLQKRRALE) are a coiled coil.

In terms of assembly, interacts with PTK6 and CSF1R. Post-translationally, phosphorylated on tyrosine. Phosphorylated by PTK6 at Tyr-250 modulates PTK6-mediated STAT3 activation. In terms of tissue distribution, widely expressed.

It localises to the cytoplasm. It is found in the membrane. In terms of biological role, substrate of protein kinase PTK6. May play a regulatory role in the acute-phase response in systemic inflammation and may modulate STAT3 activity. The sequence is that of Signal-transducing adaptor protein 2 (Stap2) from Mus musculus (Mouse).